A 97-amino-acid polypeptide reads, in one-letter code: Small integral membrane protein 8 (97 aa).

A disordered region spans residues 1 to 22; the sequence is MSSAPEPPAFKKEPPKEKDLGN. The span at 9 to 20 shows a compositional bias: basic and acidic residues; that stretch reads AFKKEPPKEKDL. The helical transmembrane segment at 48–70 threads the bilayer; that stretch reads PVMAFGLITISLCVAYIGYLHAT.

It belongs to the SMIM8 family.

It is found in the membrane. The protein is Small integral membrane protein 8 (SMIM8) of Bos taurus (Bovine).